The chain runs to 214 residues: Cytochrome c biogenesis ATP-binding export protein CcmA (214 aa).

The region spanning 16–212 (LRVSGLSLSR…PDAKRIDLGA (197 aa)) is the ABC transporter domain. 48–55 (GPNGTGKT) provides a ligand contact to ATP.

This sequence belongs to the ABC transporter superfamily. CcmA exporter (TC 3.A.1.107) family. As to quaternary structure, the complex is composed of two ATP-binding proteins (CcmA) and two transmembrane proteins (CcmB).

Its subcellular location is the cell inner membrane. It carries out the reaction heme b(in) + ATP + H2O = heme b(out) + ADP + phosphate + H(+). Its function is as follows. Part of the ABC transporter complex CcmAB involved in the biogenesis of c-type cytochromes; once thought to export heme, this seems not to be the case, but its exact role is uncertain. Responsible for energy coupling to the transport system. The protein is Cytochrome c biogenesis ATP-binding export protein CcmA of Maricaulis maris (strain MCS10) (Caulobacter maris).